Consider the following 400-residue polypeptide: Tryptophan synthase beta chain (400 aa).

Lys-91 is modified (N6-(pyridoxal phosphate)lysine).

It belongs to the TrpB family. Tetramer of two alpha and two beta chains. Pyridoxal 5'-phosphate serves as cofactor.

It catalyses the reaction (1S,2R)-1-C-(indol-3-yl)glycerol 3-phosphate + L-serine = D-glyceraldehyde 3-phosphate + L-tryptophan + H2O. It participates in amino-acid biosynthesis; L-tryptophan biosynthesis; L-tryptophan from chorismate: step 5/5. Its function is as follows. The beta subunit is responsible for the synthesis of L-tryptophan from indole and L-serine. In Listeria monocytogenes serotype 4a (strain HCC23), this protein is Tryptophan synthase beta chain.